The following is a 1563-amino-acid chain: MSSKEVKTALKSARDAIRNKEYKEALKHCKTVLKQEKNNYNAWVFIGVAAAELEQPDQAQGAYKKAAELEPEQLLAWQGLASLYEKCNQVNAKDDLPGVYQKLLDLYESADRQKWCDVCKKLVALYHQEKKHLEVARTWHRLIKTRQEDGADRQELYELWRKLSQLLAENIEDQNNETQQMLLTAFENALDLADNIPSEDHQVLYRNFIQCLSKFPHETTKLKKACEEMIAIYPTVQYPLEVICLYLIDSGSLTSEGHQYCCKLVEMNSKSGPGLIGLGIIALQDKKYEDAVRHLTEGLKESPVCIAGWCHLAEAQVKMHRPKEAILSCNQALKTIDNFGASGGNLHQKNLCLRLKAEALLKLSDGASSEEAVRTLDQVSDVDNTPGLLVLQGLACLNTGAVDKATKIMEDLVTSYPDLAEAHALEGRVHFTKKDYVQAEVSFQRALEKDAEVAEYHYQLGLTYWFMGEETRKDKTKALTHFLKAARLDAHMGKVFCYLGHYYRDVAGDRNRARGCYRKAFELDDNDAESGAAAVDLSLELEDTETALAILTAVTQKASAGAAKWAWLRRGLYHLKAGQHSQAVADLQAALRADPKDCNCWESLGEAYLSRGGYTTALKSFMKASELNPDSTYSVFKVAAIQQILGRYSEAIAQYQLIIKMKEDYVPALKGLGECHLLLGKVALVDFLDGKAVDYVEQALGYFTRALQHRADVSCLWKLVGDACTCLHPVSPSKVHVHVLGALLGQKEGQEVLKKEELLSLGGRCYGRALKLMSTSNTWCDLGINYYRQVQHLAETGSSMSDLTELLEKSLHCLKKAVRLDSNNHLHWNALGVVACYRGVGNYALAQHCFIKSIQAEQINAAAWTNLGVLYLATENIEQAHEAFKMAQSLDPSYLLCWIGQALIAERVGSYDTMDLFRHTTELSMHTEGAIGYAYWVCTTLQDKSNRETELYQYNILEMNAIPAAQGVLCKYVERIQNSASAFTMLGYLNEHLQLKKEAAEAYQRATTLLHSAEDQNTYNVAVRNWGRLLCSIGDYDRAIQAFKSTPLVELEDIIGFALALFMKGLYKESGSAYERALAVCKSEQDKAHILTAMAIVEYKQGKMDAAKSFLFKCSILKEPTAESLQALCALGLAMRDATLSKAALNELLKHIKRRNDYHSCLLMSAIYALQGHSVAVQRQVAKAVHSNPADPALWSLLSRIVAQYTQRSAKGGAVAGNVAHILDLNHGKKALLYTAVNQLAMGSSTAEDKSNTALKTIQKAAFLSPDDPAVWAGLMAACHADDKLALLNNTQPKRVDLYLALRSAVAASLKDKEILQNYNQSLEKWSFSQVVTGLIDTGKTSEAESLCTQSLKSNPDQPAVILLLRQVQCMSLLESQKPLPDAVLEELQKTVMSNSTSVPAWQWLAQVYQSQGMMGAAEMCYRKSLQVASQQGNWSGKLSSLLKLALLALEVCMANVSGDHWSSLVQEATSEALKVCFSPLAVFLQALLQFNRKMGARETRRLLERIVYQTGYPSSIVSAARWYLLRHLYAKDDPELIDVLVRNAETHGDKRILELNRKLSAQ.

Serine 2 carries the post-translational modification N-acetylserine. TPR repeat units lie at residues 6–39 (VKTA…EKNN), 40–73 (YNAW…EPEQ), 157–196 (YELW…ADNI), 272–305 (GPGL…SPVC), 307–339 (AGWC…IDNF), 386–419 (PGLL…YPDL), 420–453 (AEAH…DAEV), 455–492 (EYHY…DAHM), 493–527 (GKVF…DDND), 564–597 (KWAW…DPKD), 598–631 (CNCW…NPDS), 632–665 (TYSV…KEDY), 633–665 (YSVF…KEDY), 673–713 (GECH…RADV), 790–824 (VQHL…DSNN), 826–860 (LHWN…EQIN), 861–894 (AAAW…DPSY), 980–1013 (ASAF…LHSA), 1020–1053 (NVAV…ELED), 1055–1084 (IGFA…CKSE), 1325–1358 (KWSF…NPDQ), and 1399–1432 (VPAW…ASQQ).

Belongs to the SKI3 family. Component of the SKI complex which consists of SKIC2, SKIC3 and SKIC8. Interacts with PAF1.

It localises to the cytoplasm. Its subcellular location is the nucleus. Component of the SKI complex, a multiprotein complex that assists the RNA-degrading exosome during the mRNA decay and quality-control pathways. The SKI complex catalyzes mRNA extraction from 80S ribosomal complexes in the 3'-5' direction and channels mRNA to the cytosolic exosome for degradation. SKI-mediated extraction of mRNA from stalled ribosomes allow binding of the Pelota-HBS1L complex and subsequent ribosome disassembly by ABCE1 for ribosome recycling. In the nucleus, the SKI complex associates with transcriptionally active genes in a manner dependent on PAF1 complex (PAF1C). The polypeptide is Superkiller complex protein 3 (Mus musculus (Mouse)).